The sequence spans 128 residues: S-adenosylmethionine decarboxylase proenzyme (128 aa).

Ser-63 functions as the Schiff-base intermediate with substrate; via pyruvic acid in the catalytic mechanism. Position 63 is a pyruvic acid (Ser); by autocatalysis (Ser-63). Catalysis depends on His-68, which acts as the Proton acceptor; for processing activity. Cys-83 functions as the Proton donor; for catalytic activity in the catalytic mechanism.

The protein belongs to the prokaryotic AdoMetDC family. Type 1 subfamily. As to quaternary structure, heterotetramer of two alpha and two beta chains arranged as a dimer of alpha/beta heterodimers. The cofactor is pyruvate. Post-translationally, is synthesized initially as an inactive proenzyme. Formation of the active enzyme involves a self-maturation process in which the active site pyruvoyl group is generated from an internal serine residue via an autocatalytic post-translational modification. Two non-identical subunits are generated from the proenzyme in this reaction, and the pyruvate is formed at the N-terminus of the alpha chain, which is derived from the carboxyl end of the proenzyme. The post-translation cleavage follows an unusual pathway, termed non-hydrolytic serinolysis, in which the side chain hydroxyl group of the serine supplies its oxygen atom to form the C-terminus of the beta chain, while the remainder of the serine residue undergoes an oxidative deamination to produce ammonia and the pyruvoyl group blocking the N-terminus of the alpha chain.

It catalyses the reaction S-adenosyl-L-methionine + H(+) = S-adenosyl 3-(methylsulfanyl)propylamine + CO2. It functions in the pathway amine and polyamine biosynthesis; S-adenosylmethioninamine biosynthesis; S-adenosylmethioninamine from S-adenosyl-L-methionine: step 1/1. Its function is as follows. Catalyzes the decarboxylation of S-adenosylmethionine to S-adenosylmethioninamine (dcAdoMet), the propylamine donor required for the synthesis of the polyamines spermine and spermidine from the diamine putrescine. The chain is S-adenosylmethionine decarboxylase proenzyme from Leptospira borgpetersenii serovar Hardjo-bovis (strain JB197).